A 352-amino-acid polypeptide reads, in one-letter code: Protein RecA (352 aa).

An ATP-binding site is contributed by 67-74 (GPESSGKT).

This sequence belongs to the RecA family.

It is found in the cytoplasm. Functionally, can catalyze the hydrolysis of ATP in the presence of single-stranded DNA, the ATP-dependent uptake of single-stranded DNA by duplex DNA, and the ATP-dependent hybridization of homologous single-stranded DNAs. It interacts with LexA causing its activation and leading to its autocatalytic cleavage. The polypeptide is Protein RecA (Chlamydia trachomatis serovar L2 (strain ATCC VR-902B / DSM 19102 / 434/Bu)).